Reading from the N-terminus, the 315-residue chain is DNA-directed RNA polymerase subunit alpha (315 aa).

The segment at 1 to 229 (MLDSKLKAPV…EHLTYFSNPQ (229 aa)) is alpha N-terminal domain (alpha-NTD). Residues 247–315 (EQEEELDLPL…LEKKGFTLKE (69 aa)) are alpha C-terminal domain (alpha-CTD).

This sequence belongs to the RNA polymerase alpha chain family. As to quaternary structure, homodimer. The RNAP catalytic core consists of 2 alpha, 1 beta, 1 beta' and 1 omega subunit. When a sigma factor is associated with the core the holoenzyme is formed, which can initiate transcription.

The enzyme catalyses RNA(n) + a ribonucleoside 5'-triphosphate = RNA(n+1) + diphosphate. Functionally, DNA-dependent RNA polymerase catalyzes the transcription of DNA into RNA using the four ribonucleoside triphosphates as substrates. This chain is DNA-directed RNA polymerase subunit alpha, found in Thermus thermophilus (strain ATCC BAA-163 / DSM 7039 / HB27).